The following is a 443-amino-acid chain: Glutamate--tRNA ligase 1 (443 aa).

Positions 9 to 19 (PSPTGYLHVGN) match the 'HIGH' region motif. The 'KMSKS' region motif lies at 238-242 (KISKR). Residue Lys-241 coordinates ATP.

Belongs to the class-I aminoacyl-tRNA synthetase family. Glutamate--tRNA ligase type 1 subfamily. Monomer.

It localises to the cytoplasm. The catalysed reaction is tRNA(Glu) + L-glutamate + ATP = L-glutamyl-tRNA(Glu) + AMP + diphosphate. Functionally, catalyzes the attachment of glutamate to tRNA(Glu) in a two-step reaction: glutamate is first activated by ATP to form Glu-AMP and then transferred to the acceptor end of tRNA(Glu). The chain is Glutamate--tRNA ligase 1 from Ehrlichia ruminantium (strain Welgevonden).